Consider the following 62-residue polypeptide: Large ribosomal subunit protein bL32 (62 aa).

The disordered stretch occupies residues 28–62 (SIEPTTGEVHRRHHISPDGFYRGRQVIKAKEQDEE).

It belongs to the bacterial ribosomal protein bL32 family.

In Thioalkalivibrio sulfidiphilus (strain HL-EbGR7), this protein is Large ribosomal subunit protein bL32.